Reading from the N-terminus, the 130-residue chain is Small ribosomal subunit protein uS11c (130 aa).

This sequence belongs to the universal ribosomal protein uS11 family. As to quaternary structure, part of the 30S ribosomal subunit.

Its subcellular location is the plastid. The protein resides in the chloroplast. This is Small ribosomal subunit protein uS11c from Phaeodactylum tricornutum (strain CCAP 1055/1).